A 187-amino-acid chain; its full sequence is Peptide deformylase (187 aa).

2 residues coordinate Fe cation: Cys-107 and His-149. Glu-150 is an active-site residue. His-153 contacts Fe cation.

This sequence belongs to the polypeptide deformylase family. Fe(2+) serves as cofactor.

It carries out the reaction N-terminal N-formyl-L-methionyl-[peptide] + H2O = N-terminal L-methionyl-[peptide] + formate. Removes the formyl group from the N-terminal Met of newly synthesized proteins. Requires at least a dipeptide for an efficient rate of reaction. N-terminal L-methionine is a prerequisite for activity but the enzyme has broad specificity at other positions. This is Peptide deformylase from Synechocystis sp. (strain ATCC 27184 / PCC 6803 / Kazusa).